The primary structure comprises 234 residues: Phosphoribosylformylglycinamidine synthase subunit PurQ (234 aa).

In terms of domain architecture, Glutamine amidotransferase type-1 spans 5 to 234 (TVGIVVFPGS…ESLFAHLAGA (230 aa)). Residue Cys89 is the Nucleophile of the active site. Catalysis depends on residues His206 and Glu208.

Part of the FGAM synthase complex composed of 1 PurL, 1 PurQ and 2 PurS subunits.

It localises to the cytoplasm. The catalysed reaction is N(2)-formyl-N(1)-(5-phospho-beta-D-ribosyl)glycinamide + L-glutamine + ATP + H2O = 2-formamido-N(1)-(5-O-phospho-beta-D-ribosyl)acetamidine + L-glutamate + ADP + phosphate + H(+). It carries out the reaction L-glutamine + H2O = L-glutamate + NH4(+). Its pathway is purine metabolism; IMP biosynthesis via de novo pathway; 5-amino-1-(5-phospho-D-ribosyl)imidazole from N(2)-formyl-N(1)-(5-phospho-D-ribosyl)glycinamide: step 1/2. Its function is as follows. Part of the phosphoribosylformylglycinamidine synthase complex involved in the purines biosynthetic pathway. Catalyzes the ATP-dependent conversion of formylglycinamide ribonucleotide (FGAR) and glutamine to yield formylglycinamidine ribonucleotide (FGAM) and glutamate. The FGAM synthase complex is composed of three subunits. PurQ produces an ammonia molecule by converting glutamine to glutamate. PurL transfers the ammonia molecule to FGAR to form FGAM in an ATP-dependent manner. PurS interacts with PurQ and PurL and is thought to assist in the transfer of the ammonia molecule from PurQ to PurL. The chain is Phosphoribosylformylglycinamidine synthase subunit PurQ from Chlorobaculum tepidum (strain ATCC 49652 / DSM 12025 / NBRC 103806 / TLS) (Chlorobium tepidum).